Here is a 609-residue protein sequence, read N- to C-terminus: Grainyhead-like protein 1 homolog (609 aa).

The tract at residues 1-91 (MTQDYDNKRP…EHDHADHEHS (91 aa)) is transcription activation. Residues 183-207 (SDHFTSNNQPPNSQRRTPDSTFSET) form a disordered region. Residues 185 to 206 (HFTSNNQPPNSQRRTPDSTFSE) are compositionally biased toward polar residues. Residues 239–465 (AGNNFEYTLE…DLDTQPVLFI (227 aa)) enclose the Grh/CP2 DB domain. Interaction with DNA stretches follow at residues 371–380 (TDFSSQKGVK) and 418–421 (RKIR).

This sequence belongs to the grh/CP2 family. Grainyhead subfamily. In terms of assembly, binds DNA as homodimer.

The protein localises to the nucleus. In terms of biological role, transcription factor involved in epithelial development. Binds directly to the consensus DNA sequence 5'-AACCGGTT-3' and modulates expression of epidermal-specific genes, including XK81A1. Important regulator of DSG1 in the context of epidermal differentiation. Regulates the maintenance of skin barrier. No genetic interaction with GRHL3, nor functional cooperativity due to diverse target gene selectivity during epithelia development. Functions downstream of BMP-signaling cascade modulating endogenous bmp4-responsive targets. The protein is Grainyhead-like protein 1 homolog of Xenopus laevis (African clawed frog).